The primary structure comprises 95 residues: Probable FAD-linked sulfhydryl oxidase OPG072 (95 aa).

Residues 1–8 (MNPKHWGR) are Intravirion-facing. The region spanning 1–95 (MNPKHWGRAV…AIDVSKVKPL (95 aa)) is the ERV/ALR sulfhydryl oxidase domain. Residues 9 to 25 (AVWTIIFIVLSQAGLDG) form a helical membrane-spanning segment. The Virion surface portion of the chain corresponds to 26–95 (NIEACKRKLY…AIDVSKVKPL (70 aa)). Cysteines 43 and 46 form a disulfide.

This sequence belongs to the orthopoxvirus OPG072 family. As to quaternary structure, interacts with OPG128; this interaction involves formation of a transient disulfide-bonded intermediate, allowing disulfide bond transfer. Requires FAD as cofactor.

It is found in the virion membrane. Its subcellular location is the host cytoplasm. It carries out the reaction 2 R'C(R)SH + O2 = R'C(R)S-S(R)CR' + H2O2. Functionally, FAD-dependent sulfhydryl oxidase that catalyzes disulfide bond formation. The complete pathway for formation of disulfide bonds in intracellular virion membrane proteins sequentially involves thiol-disulfide transfer between OPG072, OPG128 and OPG088. The sequence is that of Probable FAD-linked sulfhydryl oxidase OPG072 (OPG072) from Monkeypox virus.